The sequence spans 782 residues: Spastin (782 aa).

The interval 1 to 103 is disordered; sequence MVRTKNQSSS…GNAPRGGNSS (103 aa). The Cytoplasmic segment spans residues 1 to 115; sequence MVRTKNQSSS…KQNLYVVSFP (115 aa). The required for localization to punctate cytoplasmic foci stretch occupies residues 1–212; sequence MVRTKNQSSS…RAIQPLEMAG (212 aa). Over residues 8–19 the composition is skewed to low complexity; sequence SSSSSASSSTKS. Residues 25-34 show a composition bias toward polar residues; that stretch reads GGTTNRSRSC. 2 stretches are compositionally biased toward low complexity: residues 44 to 75 and 84 to 93; these read SKSS…GSSP and TTDADLTPTS. The helical intramembrane region spans 116–136; sequence IIFLFNVLRSLIYQLFCIFRY. Topologically, residues 137–782 are cytoplasmic; it reads LYGASTKVIY…WSQDYGDITI (646 aa). The tract at residues 210–782 is sufficient for interaction with microtubules and microtubule severing; the sequence is MAGNRAGGNY…WSQDYGDITI (573 aa). In terms of domain architecture, MIT spans 235–310; the sequence is HRRAFEYISK…SMARDRLHFL (76 aa). The segment at 325 to 479 is disordered; that stretch reads KEQQQKKKSP…GSGSGASTPM (155 aa). The span at 334-343 shows a compositional bias: low complexity; that stretch reads PQQQPQQQQQ. Polar residues-rich tracts occupy residues 408–426 and 447–463; these read NKSQ…STSV and QFSS…RTPI. The tract at residues 465 to 479 is required for interaction with microtubules; the sequence is NNAAGGSGSGASTPM. 547 to 554 is an ATP binding site; sequence GPPGNGKT.

This sequence belongs to the AAA ATPase family. Spastin subfamily. In terms of assembly, homohexamer. The homohexamer is stabilized by ATP-binding. The homohexamer may adopt a ring conformation through which microtubules pass prior to being severed. Interacts with microtubules. Interacts with atl; may be involved in microtubule dynamics.

It is found in the membrane. It localises to the cytoplasm. The protein localises to the cytoskeleton. The protein resides in the microtubule organizing center. Its subcellular location is the centrosome. It is found in the chromosome. It localises to the lipid droplet. The enzyme catalyses n ATP + n H2O + a microtubule = n ADP + n phosphate + (n+1) alpha/beta tubulin heterodimers.. Its function is as follows. ATP-dependent microtubule severing protein. Stimulates microtubule minus-end depolymerization and poleward microtubule flux in the mitotic spindle. Regulates microtubule stability in the neuromuscular junction synapse. Involved in lipid metabolism by regulating the size and distribution of lipid droplets. Involved in axon regeneration by regulating microtubule severing. This Drosophila grimshawi (Hawaiian fruit fly) protein is Spastin.